The sequence spans 210 residues: S-norcoclaurine synthase (210 aa).

The first 19 residues, 1–19 (MMKMEVVFVFLMLLGTINC), serve as a signal peptide directing secretion. 108–110 (YKE) provides a ligand contact to dopamine. K122 acts as the Proton donor in catalysis. Residue D141 coordinates (4-hydroxyphenyl)acetaldehyde.

It belongs to the BetVI family. In terms of assembly, concentration-dependent dimerization, but mainly monomeric at concentrations around 10 uM. Expressed most abundantly in the rhizomes and to a lesser extent in petioles, roots, leaves and flower buds.

It catalyses the reaction (4-hydroxyphenyl)acetaldehyde + dopamine = (S)-norcoclaurine + H2O. Functionally, involved in the biosynthesis of the common precursor of all benzylisoquinoline alkaloids such as morphine, sanguinarine, codeine or berberine. Condenses dopamine and 4-hydroxyphenylacetaldehyde. The chain is S-norcoclaurine synthase from Thalictrum flavum subsp. glaucum (Yellow meadow rue).